A 206-amino-acid chain; its full sequence is Large ribosomal subunit protein uL4 (206 aa).

The disordered stretch occupies residues 63-97; sequence MYKQKGTGRARHHSARAPQFRGGGKAHGPVVRSHE. Basic residues predominate over residues 64–77; the sequence is YKQKGTGRARHHSA.

It belongs to the universal ribosomal protein uL4 family. In terms of assembly, part of the 50S ribosomal subunit.

Functionally, one of the primary rRNA binding proteins, this protein initially binds near the 5'-end of the 23S rRNA. It is important during the early stages of 50S assembly. It makes multiple contacts with different domains of the 23S rRNA in the assembled 50S subunit and ribosome. Its function is as follows. Forms part of the polypeptide exit tunnel. This Rhizobium leguminosarum bv. trifolii (strain WSM2304) protein is Large ribosomal subunit protein uL4.